The chain runs to 955 residues: Translation initiation factor IF-2 (955 aa).

The interval 49 to 352 is disordered; sequence AFSQSSESTE…QAPSFGGVKI (304 aa). The segment covering 77–88 has biased composition (low complexity); it reads PQQQTKASAPSA. Pro residues-rich tracts occupy residues 95 to 121, 149 to 159, 188 to 202, and 209 to 223; these read PAVPKPGPGLKPGPRPVPKPGPRPGPR, RPVPKPGPRPG, RPGPRPHPGMMPPRP, and PPRPQAPRPQAPRPG. A compositionally biased stretch (gly residues) spans 225-235; it reads GTAGGRPGSSA. Residues 238-264 show a composition bias toward pro residues; it reads PPRPVPRPGPRPSPMNMPASRPTPPGG. The segment covering 273 to 322 has biased composition (gly residues); that stretch reads SGGGRGRGGGGGAGPRGGGAGGGAPRTGFGGRPGGGRGRGGTAGAFGRPG. Residues 326 to 335 show a composition bias toward basic residues; that stretch reads SRSRKSKKQR. In terms of domain architecture, tr-type G spans 448–620; the sequence is PRAPVVTVMG…IILTADAELD (173 aa). Residues 457–464 are G1; it reads GHVDHGKT. 457-464 contacts GTP; it reads GHVDHGKT. Positions 482–486 are G2; sequence GITQH. Residues 507-510 are G3; that stretch reads DTPG. Residues 507–511 and 561–564 each bind GTP; these read DTPGH and NKID. Positions 561-564 are G4; it reads NKID. A G5 region spans residues 597–599; it reads SAK.

The protein belongs to the TRAFAC class translation factor GTPase superfamily. Classic translation factor GTPase family. IF-2 subfamily.

Its subcellular location is the cytoplasm. Its function is as follows. One of the essential components for the initiation of protein synthesis. Protects formylmethionyl-tRNA from spontaneous hydrolysis and promotes its binding to the 30S ribosomal subunits. Also involved in the hydrolysis of GTP during the formation of the 70S ribosomal complex. This Thermobifida fusca (strain YX) protein is Translation initiation factor IF-2.